A 308-amino-acid polypeptide reads, in one-letter code: Ribosomal RNA small subunit methyltransferase H (308 aa).

S-adenosyl-L-methionine contacts are provided by residues glycine 36–histidine 38, aspartate 55, phenylalanine 86, aspartate 103, and glutamine 110.

This sequence belongs to the methyltransferase superfamily. RsmH family.

Its subcellular location is the cytoplasm. It catalyses the reaction cytidine(1402) in 16S rRNA + S-adenosyl-L-methionine = N(4)-methylcytidine(1402) in 16S rRNA + S-adenosyl-L-homocysteine + H(+). Functionally, specifically methylates the N4 position of cytidine in position 1402 (C1402) of 16S rRNA. In Helicobacter pylori (strain HPAG1), this protein is Ribosomal RNA small subunit methyltransferase H.